A 467-amino-acid chain; its full sequence is Inactive pancreatic lipase-related protein 1 (467 aa).

Residues 1–17 (MLIFWTITLFLLGAAKG) form the signal peptide. Intrachain disulfides connect cysteine 21–cysteine 27 and cysteine 109–cysteine 120. Serine 171 serves as the catalytic Nucleophile. The active-site Charge relay system is aspartate 194. Ca(2+)-binding residues include glutamate 205, arginine 208, aspartate 210, and aspartate 213. Residues cysteine 255 and cysteine 279 are joined by a disulfide bond. The active-site Charge relay system is the histidine 281. Disulfide bonds link cysteine 303–cysteine 314, cysteine 317–cysteine 322, and cysteine 451–cysteine 467. Residues 356–467 (WRYGVSITLS…EDTLLTLTPC (112 aa)) form the PLAT domain.

The protein belongs to the AB hydrolase superfamily. Lipase family. Pancreas.

Its subcellular location is the secreted. Its function is as follows. May function as inhibitor of dietary triglyceride digestion. Lacks detectable lipase activity towards triglycerides, diglycerides, phosphatidylcholine, galactolipids or cholesterol esters (in vitro). The protein is Inactive pancreatic lipase-related protein 1 (PNLIPRP1) of Homo sapiens (Human).